The sequence spans 747 residues: Asparagine synthetase [glutamine-hydrolyzing] 2 (747 aa).

The active-site For GATase activity is Cys-2. Residues 2-218 (CGLAGIINLA…AGHYLEINLT (217 aa)) form the Glutamine amidotransferase type-2 domain. L-glutamine-binding positions include 52 to 56 (RLSIL), 77 to 79 (NGE), and Asp-100. 395-396 (SP) contributes to the ATP binding site.

The protein belongs to the asparagine synthetase family.

It carries out the reaction L-aspartate + L-glutamine + ATP + H2O = L-asparagine + L-glutamate + AMP + diphosphate + H(+). It participates in amino-acid biosynthesis; L-asparagine biosynthesis; L-asparagine from L-aspartate (L-Gln route): step 1/1. This chain is Asparagine synthetase [glutamine-hydrolyzing] 2 (asnH), found in Bacillus subtilis (strain 168).